Consider the following 246-residue polypeptide: Acetylglutamate kinase (246 aa).

Substrate contacts are provided by residues 30–31 (GG), arginine 52, and asparagine 151.

It belongs to the acetylglutamate kinase family. ArgB subfamily.

The protein resides in the cytoplasm. It carries out the reaction N-acetyl-L-glutamate + ATP = N-acetyl-L-glutamyl 5-phosphate + ADP. The protein operates within amino-acid biosynthesis; L-arginine biosynthesis; N(2)-acetyl-L-ornithine from L-glutamate: step 2/4. In terms of biological role, catalyzes the ATP-dependent phosphorylation of N-acetyl-L-glutamate. In Methanopyrus kandleri (strain AV19 / DSM 6324 / JCM 9639 / NBRC 100938), this protein is Acetylglutamate kinase.